The primary structure comprises 167 residues: Crossover junction endodeoxyribonuclease RuvC (167 aa).

Active-site residues include Asp-7, Glu-67, and Asp-139. 3 residues coordinate Mg(2+): Asp-7, Glu-67, and Asp-139.

The protein belongs to the RuvC family. As to quaternary structure, homodimer which binds Holliday junction (HJ) DNA. The HJ becomes 2-fold symmetrical on binding to RuvC with unstacked arms; it has a different conformation from HJ DNA in complex with RuvA. In the full resolvosome a probable DNA-RuvA(4)-RuvB(12)-RuvC(2) complex forms which resolves the HJ. Mg(2+) is required as a cofactor.

It is found in the cytoplasm. It catalyses the reaction Endonucleolytic cleavage at a junction such as a reciprocal single-stranded crossover between two homologous DNA duplexes (Holliday junction).. Functionally, the RuvA-RuvB-RuvC complex processes Holliday junction (HJ) DNA during genetic recombination and DNA repair. Endonuclease that resolves HJ intermediates. Cleaves cruciform DNA by making single-stranded nicks across the HJ at symmetrical positions within the homologous arms, yielding a 5'-phosphate and a 3'-hydroxyl group; requires a central core of homology in the junction. The consensus cleavage sequence is 5'-(A/T)TT(C/G)-3'. Cleavage occurs on the 3'-side of the TT dinucleotide at the point of strand exchange. HJ branch migration catalyzed by RuvA-RuvB allows RuvC to scan DNA until it finds its consensus sequence, where it cleaves and resolves the cruciform DNA. The chain is Crossover junction endodeoxyribonuclease RuvC from Akkermansia muciniphila (strain ATCC BAA-835 / DSM 22959 / JCM 33894 / BCRC 81048 / CCUG 64013 / CIP 107961 / Muc).